A 997-amino-acid polypeptide reads, in one-letter code: RNA2 polyprotein (997 aa).

An involved in tubule formation by the movement protein region spans residues 370-376; it reads KVVSVKG.

As to quaternary structure, interacts with the large capsid protein. Interacts with the small capsid protein. Homomultimer; assembles as pentons. Interacts with the movement protein (via C-terminus). In terms of assembly, interacts (via C-terminus) with the large capsid protein. Specific enzymatic cleavages by picornain 3C-like protease in vivo yield mature proteins.

Its subcellular location is the host cell junction. The protein localises to the host plasmodesma. The protein resides in the virion. Responsible for viral RNA2 accumulation. May function by recruiting the RNA1-encoded polyprotein that contains the replication protein to RNA2 and enable its replication. In terms of biological role, transports the viral genome to neighboring plant cells directly through plasmosdesmata, without any budding. The movement protein allows efficient cell to cell propagation, by bypassing the host cell wall barrier. Acts by forming a tubular structure at the host plasmodesmata, enlarging it enough to allow free passage of virion capsids. Binds to GTP and to single-stranded RNA and single-stranded DNA in a non-sequence-specific manner. Functionally, together with the small capsid protein, forms an icosahedral capsid (T=3) enclosing the viral positive strand RNA genome, with a diameter of approximately 300 Angstroms. The capsid is formed from 60 copies each of the large and the small capsid protein. The large capsid protein interacts with the viral RNA. Its function is as follows. Together with the large capsid protein, forms an icosahedral capsid (T=3) enclosing the viral positive strand RNA genome, with a diameter of approximately 300 Angstroms. The capsid is formed from 60 copies each of the large and the small capsid protein. The small capsid protein forms the turrets at the fivefold axes of the viral particle. Also seems to act as suppressor of post-transcriptional gene silencing (PTGS), a mechanism of plant viral defense that limits the accumulation of viral RNAs. This Andean potato mottle virus (APMV) protein is RNA2 polyprotein.